The primary structure comprises 270 residues: Elongation factor Ts (270 aa).

The segment at 75 to 78 (TDFV) is involved in Mg(2+) ion dislocation from EF-Tu.

This sequence belongs to the EF-Ts family.

The protein resides in the cytoplasm. Associates with the EF-Tu.GDP complex and induces the exchange of GDP to GTP. It remains bound to the aminoacyl-tRNA.EF-Tu.GTP complex up to the GTP hydrolysis stage on the ribosome. This Cutibacterium acnes (strain DSM 16379 / KPA171202) (Propionibacterium acnes) protein is Elongation factor Ts.